The sequence spans 214 residues: Elongation factor Ts (214 aa).

Positions threonine 80–valine 83 are involved in Mg(2+) ion dislocation from EF-Tu.

Belongs to the EF-Ts family.

It localises to the cytoplasm. In terms of biological role, associates with the EF-Tu.GDP complex and induces the exchange of GDP to GTP. It remains bound to the aminoacyl-tRNA.EF-Tu.GTP complex up to the GTP hydrolysis stage on the ribosome. The protein is Elongation factor Ts of Syntrophomonas wolfei subsp. wolfei (strain DSM 2245B / Goettingen).